We begin with the raw amino-acid sequence, 148 residues long: Large ribosomal subunit protein bL9 (148 aa).

It belongs to the bacterial ribosomal protein bL9 family.

Its function is as follows. Binds to the 23S rRNA. The polypeptide is Large ribosomal subunit protein bL9 (Bacillus cytotoxicus (strain DSM 22905 / CIP 110041 / 391-98 / NVH 391-98)).